Here is a 333-residue protein sequence, read N- to C-terminus: Ketol-acid reductoisomerase (NADP(+)) (333 aa).

The region spanning 1–179 (MFYDDNADLS…GGTRAGVIKT (179 aa)) is the KARI N-terminal Rossmann domain. NADP(+) contacts are provided by residues 22-25 (YGSQ), S48, S50, and 80-83 (DTAQ). The active site involves H105. Residue G131 participates in NADP(+) binding. The KARI C-terminal knotted domain maps to 180–325 (TFKDETETDL…KKLRDLMSWV (146 aa)). Positions 188, 192, 224, and 228 each coordinate Mg(2+). S249 contacts substrate.

Belongs to the ketol-acid reductoisomerase family. Mg(2+) is required as a cofactor.

It catalyses the reaction (2R)-2,3-dihydroxy-3-methylbutanoate + NADP(+) = (2S)-2-acetolactate + NADPH + H(+). The enzyme catalyses (2R,3R)-2,3-dihydroxy-3-methylpentanoate + NADP(+) = (S)-2-ethyl-2-hydroxy-3-oxobutanoate + NADPH + H(+). It functions in the pathway amino-acid biosynthesis; L-isoleucine biosynthesis; L-isoleucine from 2-oxobutanoate: step 2/4. It participates in amino-acid biosynthesis; L-valine biosynthesis; L-valine from pyruvate: step 2/4. Its function is as follows. Involved in the biosynthesis of branched-chain amino acids (BCAA). Catalyzes an alkyl-migration followed by a ketol-acid reduction of (S)-2-acetolactate (S2AL) to yield (R)-2,3-dihydroxy-isovalerate. In the isomerase reaction, S2AL is rearranged via a Mg-dependent methyl migration to produce 3-hydroxy-3-methyl-2-ketobutyrate (HMKB). In the reductase reaction, this 2-ketoacid undergoes a metal-dependent reduction by NADPH to yield (R)-2,3-dihydroxy-isovalerate. This Mycobacterium leprae (strain TN) protein is Ketol-acid reductoisomerase (NADP(+)).